The following is a 1522-amino-acid chain: DNA topoisomerase 2-binding protein 1 (1522 aa).

2 BRCT domains span residues 101–189 (VYNM…RYTD) and 195–284 (FKCP…IYKT). Thr-298 bears the Phosphothreonine mark. The residue at position 301 (Ser-301) is a Phosphoserine. 3 consecutive BRCT domains span residues 354–444 (APED…PYIH), 548–633 (TEEG…SNPL), and 641–738 (TGMT…HFLI). The tract at residues 756–891 (INLNSDTAEH…AVALSASPQL (136 aa)) is interaction with CIP2A. Thr-779 and Thr-848 each carry phosphothreonine. The Nuclear localization signal signature appears at 852 to 858 (PSQQKRK). Ser-860 carries the post-translational modification Phosphoserine. A Phosphothreonine modification is found at Thr-861. A phosphoserine mark is found at Ser-864, Ser-886, and Ser-888. In terms of domain architecture, BRCT 6 spans 900–991 (EAPKPLHKVV…KHLPESLYPH (92 aa)). At Ser-1002 the chain carries Phosphoserine. The disordered stretch occupies residues 1018 to 1058 (VSSTKDDEPDPLILEENDVDNMATNNKESAPSNGSGKNDSK). Positions 1024 to 1036 (DEPDPLILEENDV) are enriched in acidic residues. The span at 1039–1058 (MATNNKESAPSNGSGKNDSK) shows a compositional bias: polar residues. Phosphothreonine occurs at positions 1062 and 1064. The segment covering 1083 to 1114 (SIVKPQGQRTSLSRSGCNSASSTPDSTRSARS) has biased composition (polar residues). The tract at residues 1083-1118 (SIVKPQGQRTSLSRSGCNSASSTPDSTRSARSGRSR) is disordered. BRCT domains lie at 1259–1351 (ETHE…DYEW) and 1389–1486 (IVEG…NYCL). Positions 1501–1522 (TGLSQKRKAPTEKNKIKRPRVH) are disordered. Position 1504 is a phosphoserine (Ser-1504). The Nuclear localization signal motif lies at 1517 to 1520 (KRPR).

Belongs to the TOPBP1 family. Interacts (via BRCT domains 1 and 2) with (phosphorylated) MDC1; promoting TOPBP1 recruitment to DNA damage sites during mitosis. Interacts (via BRCT domains 7 and 8) with (autophosphorylated) ATR; promoting activation of ATR. Interacts (via BRCT domains 7 and 8) with (phosphorylated) POLQ; specifically binds POLQ phosphorylated by PLK1, promoting POLQ recruitment to DNA damage sites. Interacts (via BRCT domains 1 and 2) with (phosphorylated) RAD9A. Interacts (via BRCT domain 2) with (phosphorylated) TP53BP1. Interacts (via BRCT domain 2) with (phosphorylated) HTATSF1. Interacts (via BRCT domains 7 and 8) with (phosphorylated) RAD51; promoting RAD51 recruitment to damaged chromatin. Interacts with CIP2A; forming the CIP2A-TOPBP1 complex. Interacts with POLE. Interacts with UBR5. Interacts with E2F1. Interacts with PML. Interacts with SMARCA2. Interacts with SMARCA4. Interacts with RHNO1. May interact with TOP2B. Interacts with TICRR. Interacts with HELB. Interacts (via residues 1233-1522) with RECQL4. In terms of processing, phosphorylated on serine and threonine residues in response to X-ray irradiation. Ubiquitinated and degraded by the proteasome. X-ray irradiation reduces ubiquitination. Deubiquitinated by USP13; leading to TOPBP1 stabilizion and activation of the ATR-TOPBP1 axis pathway. As to expression, highly expressed in heart, brain, placenta, lung and kidney.

It is found in the nucleus. The protein resides in the chromosome. The protein localises to the cytoplasm. It localises to the cytoskeleton. Its subcellular location is the microtubule organizing center. It is found in the centrosome. The protein resides in the spindle pole. Functionally, scaffold protein that acts as a key protein-protein adapter in DNA replication and DNA repair. Composed of multiple BRCT domains, which specifically recognize and bind phosphorylated proteins, bringing proteins together into functional combinations. Required for DNA replication initiation but not for the formation of pre-replicative complexes or the elongation stages. Necessary for the loading of replication factors onto chromatin, including GMNC, CDC45, DNA polymerases and components of the GINS complex. Plays a central role in DNA repair by bridging proteins and promoting recruitment of proteins to DNA damage sites. Involved in double-strand break (DSB) repair via homologous recombination in S-phase by promoting the exchange between the DNA replication factor A (RPA) complex and RAD51. Mechanistically, TOPBP1 is recruited to DNA damage sites in S-phase via interaction with phosphorylated HTATSF1, and promotes the loading of RAD51, thereby facilitating RAD51 nucleofilaments formation and RPA displacement, followed by homologous recombination. Involved in microhomology-mediated end-joining (MMEJ) DNA repair by promoting recruitment of polymerase theta (POLQ) to DNA damage sites during mitosis. MMEJ is an alternative non-homologous end-joining (NHEJ) machinery that takes place during mitosis to repair DSBs in DNA that originate in S-phase. Recognizes and binds POLQ phosphorylated by PLK1, enabling its recruitment to DSBs for subsequent repair. Involved in G1 DNA damage checkpoint by acting as a molecular adapter that couples TP53BP1 and the 9-1-1 complex. In response to DNA damage, triggers the recruitment of checkpoint signaling proteins on chromatin, which activate the CHEK1 signaling pathway and block S-phase progression. Acts as an activator of the kinase activity of ATR. Also required for chromosomal stability when DSBs occur during mitosis by forming filamentous assemblies that bridge MDC1 and tether broken chromosomes during mitosis. Together with CIP2A, plays an essential role in the response to genome instability generated by the presence of acentric chromosome fragments derived from shattered chromosomes within micronuclei. Micronuclei, which are frequently found in cancer cells, consist of chromatin surrounded by their own nuclear membrane: following breakdown of the micronuclear envelope, a process associated with chromothripsis, the CIP2A-TOPBP1 complex tethers chromosome fragments during mitosis to ensure clustered segregation of the fragments to a single daughter cell nucleus, facilitating re-ligation with limited chromosome scattering and loss. Recruits the SWI/SNF chromatin remodeling complex to E2F1-responsive promoters, thereby down-regulating E2F1 activity and inhibiting E2F1-dependent apoptosis during G1/S transition and after DNA damage. This Homo sapiens (Human) protein is DNA topoisomerase 2-binding protein 1.